A 55-amino-acid polypeptide reads, in one-letter code: Eclosion hormone (55 aa).

Belongs to the insect eclosion hormone family.

The protein localises to the secreted. Neuropeptide that triggers the performance of ecdysis behaviors at the end of a molt. It triggers adult behavior patterns: larval, pupal and adult ecdysis, and plasticization during the molt. The polypeptide is Eclosion hormone (Romalea microptera (Eastern lubber grasshopper)).